Consider the following 402-residue polypeptide: Argininosuccinate synthase (402 aa).

Residues 10-18 and Ala-38 contribute to the ATP site; that span reads AYSGGLDTS. Position 90 (Tyr-90) interacts with L-citrulline. ATP is bound at residue Gly-120. Positions 122, 126, and 127 each coordinate L-aspartate. L-citrulline is bound at residue Asn-126. The L-citrulline site is built by Arg-130, Ser-179, Ser-188, Glu-264, and Tyr-276.

This sequence belongs to the argininosuccinate synthase family. Type 1 subfamily. In terms of assembly, homotetramer.

It localises to the cytoplasm. It carries out the reaction L-citrulline + L-aspartate + ATP = 2-(N(omega)-L-arginino)succinate + AMP + diphosphate + H(+). It participates in amino-acid biosynthesis; L-arginine biosynthesis; L-arginine from L-ornithine and carbamoyl phosphate: step 2/3. This Psychromonas ingrahamii (strain DSM 17664 / CCUG 51855 / 37) protein is Argininosuccinate synthase.